A 719-amino-acid chain; its full sequence is Protein borderless (719 aa).

Residues 1–33 (MPAKRSRTFRQSGSALLALLAIILLMNISCTSA) form the signal peptide. Over 34-650 (ARDHRRQTNL…IDVPSQRKVR (617 aa)) the chain is Extracellular. 4 consecutive Ig-like domains span residues 40 to 128 (QTNL…CQVS), 134 to 241 (PSVR…AFLN), 246 to 334 (AKVI…PVIS), and 341 to 429 (PIFS…AELM). Disulfide bonds link Cys-55–Cys-125, Cys-172–Cys-224, Cys-267–Cys-318, and Cys-363–Cys-413. Fibronectin type-III domains lie at 434–527 (APRA…TLPS) and 555–646 (APWN…VPSQ). A helical membrane pass occupies residues 651-671 (ALIIGSSVGVIFLLCALCAFL). The Cytoplasmic segment spans residues 672 to 719 (YVKRSCLRHLFAKDSSASEDEDTAESGDCDSDEQDQRDRDSIKIRQST). Residues 685 to 719 (DSSASEDEDTAESGDCDSDEQDQRDRDSIKIRQST) form a disordered region. Over residues 688–704 (ASEDEDTAESGDCDSDE) the composition is skewed to acidic residues. Basic and acidic residues predominate over residues 705 to 719 (QDQRDRDSIKIRQST).

Belongs to the immunoglobulin superfamily. In terms of assembly, interacts with tutl. As to expression, in the visual system, expressed in lamina and medulla (at protein level).

Its subcellular location is the cell membrane. It localises to the cell projection. The protein resides in the axon. In terms of biological role, in the developing eye, has a role in axonal targeting of the R7 photoreceptor where it functions together with tutl. Probably mediates homotypic cell adhesion; the effect is inhibited by Lar. The protein is Protein borderless of Drosophila melanogaster (Fruit fly).